The chain runs to 164 residues: Large ribosomal subunit protein uL10 (164 aa).

Belongs to the universal ribosomal protein uL10 family. In terms of assembly, part of the ribosomal stalk of the 50S ribosomal subunit. The N-terminus interacts with L11 and the large rRNA to form the base of the stalk. The C-terminus forms an elongated spine to which L12 dimers bind in a sequential fashion forming a multimeric L10(L12)X complex.

In terms of biological role, forms part of the ribosomal stalk, playing a central role in the interaction of the ribosome with GTP-bound translation factors. The protein is Large ribosomal subunit protein uL10 of Photobacterium profundum (strain SS9).